Here is an 883-residue protein sequence, read N- to C-terminus: UTP--glucose-1-phosphate uridylyltransferase 3, chloroplastic (883 aa).

A chloroplast-targeting transit peptide spans Met-1–Pro-72.

Belongs to the UDPGP type 1 family. Mg(2+) serves as cofactor.

It localises to the plastid. The protein localises to the chloroplast. The catalysed reaction is alpha-D-glucose 1-phosphate + UTP + H(+) = UDP-alpha-D-glucose + diphosphate. Inhibited by pyrophosphate. Its function is as follows. Involved in the biosynthesis of sulfolipids in the chloroplast. Catalyzes the first committed step in sulfolipid biosynthesis. Converts glucose 1-phosphate to UDP-glucose, the precursor of the polar head of sulfolipid. In addition to glucose 1-phosphate, can use galactose 1-phosphate, but with much lower activity. No uridyltransferase activity with other hexose monophosphates. Specific for UTP and cannot use ATP, CTP, and GTP. The chain is UTP--glucose-1-phosphate uridylyltransferase 3, chloroplastic from Arabidopsis thaliana (Mouse-ear cress).